A 148-amino-acid polypeptide reads, in one-letter code: ATP synthase epsilon chain (148 aa).

It belongs to the ATPase epsilon chain family. F-type ATPases have 2 components, CF(1) - the catalytic core - and CF(0) - the membrane proton channel. CF(1) has five subunits: alpha(3), beta(3), gamma(1), delta(1), epsilon(1). CF(0) has three main subunits: a, b and c.

The protein localises to the cell inner membrane. Functionally, produces ATP from ADP in the presence of a proton gradient across the membrane. The chain is ATP synthase epsilon chain from Paracoccus denitrificans (strain Pd 1222).